We begin with the raw amino-acid sequence, 379 residues long: Heme chaperone HemW (379 aa).

One can recognise a Radical SAM core domain in the interval 1–232 (MLQKPNSAYF…MDILAKNGYN (232 aa)). Y9 serves as a coordination point for S-adenosyl-L-methionine. C15, C19, and C22 together coordinate [4Fe-4S] cluster. S-adenosyl-L-methionine-binding positions include G60, 61–62 (GT), E93, Q120, R132, and D157.

The protein belongs to the anaerobic coproporphyrinogen-III oxidase family. HemW subfamily. Homodimer.

Its subcellular location is the cytoplasm. It is found in the cell membrane. In terms of biological role, could serve in the delivery of heme to a membrane-localized target protein. Binds one molecule of heme per monomer, possibly covalently; heme and Fe-S cluster binding are independent. Incubation with the reductant sodium dithionite increases binding. Does not have coproporphyrinogen III dehydrogenase activity in vitro, does not complement an E.coli hemN deletion in vivo. Binds 1 Fe-S cluster, it is probably [4Fe-4S]. The cluster is coordinated with 3 cysteines and an exchangeable S-adenosyl-L-methionine; only dimeric protein has the cluster. This is Heme chaperone HemW from Lactococcus lactis subsp. lactis (strain IL1403) (Streptococcus lactis).